A 147-amino-acid polypeptide reads, in one-letter code: Deoxyuridine 5'-triphosphate nucleotidohydrolase (147 aa).

Residues 67–69 (RSG), asparagine 80, and 84–86 (TID) contribute to the substrate site.

The protein belongs to the dUTPase family. It depends on Mg(2+) as a cofactor.

The enzyme catalyses dUTP + H2O = dUMP + diphosphate + H(+). The protein operates within pyrimidine metabolism; dUMP biosynthesis; dUMP from dCTP (dUTP route): step 2/2. This enzyme is involved in nucleotide metabolism: it produces dUMP, the immediate precursor of thymidine nucleotides and it decreases the intracellular concentration of dUTP so that uracil cannot be incorporated into DNA. The protein is Deoxyuridine 5'-triphosphate nucleotidohydrolase of Anaeromyxobacter sp. (strain Fw109-5).